Consider the following 301-residue polypeptide: HTH-type transcriptional regulator MtrA (301 aa).

In terms of domain architecture, HTH araC/xylS-type spans lysine 196–glutamate 297. 2 consecutive DNA-binding regions (H-T-H motif) follow at residues aspartate 216–valine 237 and valine 264–tyrosine 287.

With respect to regulation, the affinity for the mtrCDE promoter increases 2-fold in the presence of TX-100, a known effector and substrate of the MtrCDE pump. Involved in the induction of the mtrCDE-encoded efflux pump. Binds specifically to the mtrCDE promoter region. Required for high-level inducible resistance to the detergent Triton X-100 (TX-100) and the spermicide nonoxynol-9 (N-9). This chain is HTH-type transcriptional regulator MtrA, found in Neisseria gonorrhoeae.